Here is a 276-residue protein sequence, read N- to C-terminus: Rhomboid protease GlpG (276 aa).

The next 6 helical transmembrane spans lie at 94–114 (GPFT…QNLL), 142–162 (AFMH…WYLG), 169–189 (IGSG…GFVQ), 192–212 (FSGP…GYVW), 229–249 (LILF…GMAI), and 252–272 (GAHV…TLHG). Ser-201 acts as the Nucleophile in catalysis. The active site involves His-254.

This sequence belongs to the peptidase S54 family.

It is found in the cell inner membrane. It carries out the reaction Cleaves type-1 transmembrane domains using a catalytic dyad composed of serine and histidine that are contributed by different transmembrane domains.. Functionally, rhomboid-type serine protease that catalyzes intramembrane proteolysis. The protein is Rhomboid protease GlpG of Klebsiella pneumoniae subsp. pneumoniae (strain ATCC 700721 / MGH 78578).